The following is an 832-amino-acid chain: Alpha-glucan phosphorylase, H isozyme (832 aa).

K678 carries the N6-(pyridoxal phosphate)lysine modification.

The protein belongs to the glycogen phosphorylase family. It depends on pyridoxal 5'-phosphate as a cofactor.

Its subcellular location is the cytoplasm. The catalysed reaction is [(1-&gt;4)-alpha-D-glucosyl](n) + phosphate = [(1-&gt;4)-alpha-D-glucosyl](n-1) + alpha-D-glucose 1-phosphate. Its function is as follows. Phosphorylase is an important allosteric enzyme in carbohydrate metabolism. Enzymes from different sources differ in their regulatory mechanisms and in their natural substrates. However, all known phosphorylases share catalytic and structural properties. The polypeptide is Alpha-glucan phosphorylase, H isozyme (Triticum aestivum (Wheat)).